The primary structure comprises 159 residues: Urease subunit beta 2 (159 aa).

The disordered stretch occupies residues 1–23; the sequence is MAKEPTEAAHPQPEQTKTNHKAH.

The protein belongs to the urease beta subunit family. In terms of assembly, heterotrimer of UreA (gamma), UreB (beta) and UreC (alpha) subunits. Three heterotrimers associate to form the active enzyme.

It is found in the cytoplasm. The catalysed reaction is urea + 2 H2O + H(+) = hydrogencarbonate + 2 NH4(+). Its pathway is nitrogen metabolism; urea degradation; CO(2) and NH(3) from urea (urease route): step 1/1. This chain is Urease subunit beta 2, found in Brucella abortus biovar 1 (strain 9-941).